Consider the following 205-residue polypeptide: Transcriptional regulator GfcR (205 aa).

It belongs to the purine/pyrimidine phosphoribosyltransferase family. GfcR subfamily.

In Methanococcus vannielii (strain ATCC 35089 / DSM 1224 / JCM 13029 / OCM 148 / SB), this protein is Transcriptional regulator GfcR.